The sequence spans 130 residues: Small ribosomal subunit protein uS9 (130 aa).

The protein belongs to the universal ribosomal protein uS9 family.

In Pseudomonas syringae pv. tomato (strain ATCC BAA-871 / DC3000), this protein is Small ribosomal subunit protein uS9.